We begin with the raw amino-acid sequence, 688 residues long: Potassium-transporting ATPase ATP-binding subunit (688 aa).

Helical transmembrane passes span Pro34 to Leu54, Ala62 to Ala82, Val219 to Leu239, and Val260 to Ile280. Asp313 acts as the 4-aspartylphosphate intermediate in catalysis. ATP contacts are provided by residues Asp350, Glu354, Phe383–Ser390, and Lys401. Residues Asp524 and Asp528 each coordinate Mg(2+). 3 consecutive transmembrane segments (helical) span residues Phe594–Met614, Ala622–Leu642, and Ile662–Leu682.

The protein belongs to the cation transport ATPase (P-type) (TC 3.A.3) family. Type IA subfamily. The system is composed of three essential subunits: KdpA, KdpB and KdpC.

The protein localises to the cell inner membrane. It carries out the reaction K(+)(out) + ATP + H2O = K(+)(in) + ADP + phosphate + H(+). Part of the high-affinity ATP-driven potassium transport (or Kdp) system, which catalyzes the hydrolysis of ATP coupled with the electrogenic transport of potassium into the cytoplasm. This subunit is responsible for energy coupling to the transport system and for the release of the potassium ions to the cytoplasm. This chain is Potassium-transporting ATPase ATP-binding subunit, found in Yersinia pseudotuberculosis serotype O:1b (strain IP 31758).